A 631-amino-acid polypeptide reads, in one-letter code: RNA polymerase sigma factor RpoD (631 aa).

Positions 395–465 (LIKANLRLVV…TRSISDQART (71 aa)) are sigma-70 factor domain-2. The Interaction with polymerase core subunit RpoC motif lies at 419–422 (DLVQ). The interval 474–550 (EQINRLNRET…DKAIKNPANH (77 aa)) is sigma-70 factor domain-3. The segment at 563–616 (ILGTLPEREQEVVKMRFGLEDGYSLTLEEVGLHFNVTRERIRQIESKALRRLKN) is sigma-70 factor domain-4. Residues 589–608 (LEEVGLHFNVTRERIRQIES) constitute a DNA-binding region (H-T-H motif).

Belongs to the sigma-70 factor family. RpoD/SigA subfamily. As to quaternary structure, interacts transiently with the RNA polymerase catalytic core.

Its subcellular location is the cytoplasm. In terms of biological role, sigma factors are initiation factors that promote the attachment of RNA polymerase to specific initiation sites and are then released. This sigma factor is the primary sigma factor during exponential growth. This Borreliella burgdorferi (strain ATCC 35210 / DSM 4680 / CIP 102532 / B31) (Borrelia burgdorferi) protein is RNA polymerase sigma factor RpoD.